Here is a 299-residue protein sequence, read N- to C-terminus: Transcription termination/antitermination protein NusG (299 aa).

The disordered stretch occupies residues 30–96; the sequence is DPDEAELADA…APVEPAEPVD (67 aa). A run of 2 repeats spans residues 46-49 and 70-73. A 4 X 4 AA repeats of E-E-A-A region spans residues 46–87; that stretch reads EEAALHVESDEDEDEADVEVDAAVEEAADDAEVAEEEAEEAA. A compositionally biased stretch (acidic residues) spans 54 to 87; that stretch reads SDEDEDEADVEVDAAVEEAADDAEVAEEEAEEAA. One copy of the 3; approximate repeat lies at 80 to 83; the sequence is EEEA. Repeat unit 4 spans residues 84-87; that stretch reads EEAA. Residues 248-276 enclose the KOW domain; the sequence is VGDSVTVTDGPFATLQATINEINPDSKKV.

The protein belongs to the NusG family. Post-translationally, the N-terminus is blocked.

Participates in transcription elongation, termination and antitermination. This chain is Transcription termination/antitermination protein NusG, found in Streptomyces virginiae (Streptomyces cinnamonensis).